A 295-amino-acid polypeptide reads, in one-letter code: RNA polymerase sigma-C factor (295 aa).

Residues 73–86 carry the Polymerase core binding motif; the sequence is DLIQEANIGLMKAV. The H-T-H motif DNA-binding region spans 250-269; sequence LSELGEHFGFSRERARQLEI.

It belongs to the sigma-70 factor family.

Functionally, sigma factors are initiation factors that promote the attachment of RNA polymerase to specific initiation sites and are then released. This sigma factor is essential for normal fruiting body formation. This is RNA polymerase sigma-C factor (sigC) from Myxococcus xanthus.